The primary structure comprises 236 residues: Cell division protein FtsQ (236 aa).

The Cytoplasmic segment spans residues 1–14; that stretch reads MWDNHQALNQVADW. The chain crosses the membrane as a helical span at residues 15-37; the sequence is LFTLAGLTTIYLMVQWTIHLPLL. One can recognise a POTRA domain in the interval 37-111; sequence LPLKEVHIRS…NGLDVVVEEH (75 aa). The Periplasmic portion of the chain corresponds to 38–236; sequence PLKEVHIRSN…VSGFAARGTR (199 aa).

It belongs to the FtsQ/DivIB family. FtsQ subfamily. Part of a complex composed of FtsB, FtsL and FtsQ.

The protein resides in the cell inner membrane. Functionally, essential cell division protein. May link together the upstream cell division proteins, which are predominantly cytoplasmic, with the downstream cell division proteins, which are predominantly periplasmic. May control correct divisome assembly. In Nitrosospira multiformis (strain ATCC 25196 / NCIMB 11849 / C 71), this protein is Cell division protein FtsQ.